The chain runs to 514 residues: Putative exoglucanase type C (514 aa).

The signal sequence occupies residues 1 to 17 (MYRIVATASALIAAARA). Residues 18–439 (QQVCSLNTET…RDVPNSKVSF (422 aa)) are catalytic. The active-site Nucleophile is the E229. The Proton donor role is filled by E234. N287 carries an N-linked (GlcNAc...) asparagine glycan. A compositionally biased stretch (polar residues) spans 408 to 424 (STKVGSQRGSCATTSGK). 2 disordered regions span residues 408 to 433 (STKV…RDVP) and 448 to 485 (GSTY…QWGQ). The interval 440–482 (SNIKFGPIGSTYKSDGTTPNPPASSSTTGSSTPTNPPAGSVDQ) is linker. Positions 462–479 (ASSSTTGSSTPTNPPAGS) are enriched in low complexity. Residues 478–514 (GSVDQWGQCGGQNYSGPTTCKSPFTCKKINDFYSQCQ) enclose the CBM1 domain. Disulfide bonds link C486–C503 and C497–C513. N490 carries an N-linked (GlcNAc...) asparagine glycan.

Belongs to the glycosyl hydrolase 7 (cellulase C) family.

The enzyme catalyses Hydrolysis of (1-&gt;4)-beta-D-glucosidic linkages in cellulose and cellotetraose, releasing cellobiose from the non-reducing ends of the chains.. The polypeptide is Putative exoglucanase type C (Fusarium oxysporum (Fusarium vascular wilt)).